The primary structure comprises 215 residues: Probable transaldolase (215 aa).

The Schiff-base intermediate with substrate role is filled by K83.

Belongs to the transaldolase family. Type 3B subfamily.

It is found in the cytoplasm. It catalyses the reaction D-sedoheptulose 7-phosphate + D-glyceraldehyde 3-phosphate = D-erythrose 4-phosphate + beta-D-fructose 6-phosphate. It participates in carbohydrate degradation; pentose phosphate pathway; D-glyceraldehyde 3-phosphate and beta-D-fructose 6-phosphate from D-ribose 5-phosphate and D-xylulose 5-phosphate (non-oxidative stage): step 2/3. In terms of biological role, transaldolase is important for the balance of metabolites in the pentose-phosphate pathway. The polypeptide is Probable transaldolase (Clostridium perfringens (strain SM101 / Type A)).